Here is a 473-residue protein sequence, read N- to C-terminus: Adenosylhomocysteinase (473 aa).

Residues T64, D139, and E199 each contribute to the substrate site. 200 to 202 (TTT) lines the NAD(+) pocket. Residues K229 and D233 each coordinate substrate. NAD(+) is bound by residues N234, 263-268 (GYGDVG), E286, N321, 342-344 (IGH), and N387.

Belongs to the adenosylhomocysteinase family. NAD(+) is required as a cofactor.

It is found in the cytoplasm. It catalyses the reaction S-adenosyl-L-homocysteine + H2O = L-homocysteine + adenosine. It participates in amino-acid biosynthesis; L-homocysteine biosynthesis; L-homocysteine from S-adenosyl-L-homocysteine: step 1/1. May play a key role in the regulation of the intracellular concentration of adenosylhomocysteine. The sequence is that of Adenosylhomocysteinase from Burkholderia thailandensis (strain ATCC 700388 / DSM 13276 / CCUG 48851 / CIP 106301 / E264).